The chain runs to 546 residues: Glucose-6-phosphate isomerase (546 aa).

Residue glutamate 358 is the Proton donor of the active site. Residues histidine 389 and lysine 504 contribute to the active site.

This sequence belongs to the GPI family.

The protein localises to the cytoplasm. The enzyme catalyses alpha-D-glucose 6-phosphate = beta-D-fructose 6-phosphate. It participates in carbohydrate biosynthesis; gluconeogenesis. The protein operates within carbohydrate degradation; glycolysis; D-glyceraldehyde 3-phosphate and glycerone phosphate from D-glucose: step 2/4. Functionally, catalyzes the reversible isomerization of glucose-6-phosphate to fructose-6-phosphate. The protein is Glucose-6-phosphate isomerase of Desulfosudis oleivorans (strain DSM 6200 / JCM 39069 / Hxd3) (Desulfococcus oleovorans).